Consider the following 368-residue polypeptide: ICEBs1 integrase (368 aa).

The Core-binding (CB) domain occupies 61 to 143 (VSFPTLISIY…SLSKIFDTAV (83 aa)). The 199-residue stretch at 164 to 362 (KKMKFWRPEE…YPNKQKEMAD (199 aa)) folds into the Tyr recombinase domain. Catalysis depends on residues arginine 201, lysine 239, histidine 313, arginine 316, and histidine 339. The active-site O-(3'-phospho-DNA)-tyrosine intermediate is tyrosine 349.

It belongs to the 'phage' integrase family.

Functionally, putative integrase that is involved in the insertion of the integrative and conjugative element ICEBs1. Required for the excision of ICEBs1 from the donor cell genome and subsequent integration in the recipient cell genome. Appears not to be transferred through the mating pore. Integration of ICEBs1 involves an attachment site in the chromosome, attB, and a site in the circular form of ICEBs1, attICEBs1. The chain is ICEBs1 integrase (int) from Bacillus subtilis (strain 168).